We begin with the raw amino-acid sequence, 497 residues long: NAD(P)H-quinone oxidoreductase subunit 2, chloroplastic (497 aa).

14 helical membrane-spanning segments follow: residues 13-33 (VILP…LDLI), 37-57 (SAWL…ALVF), 76-96 (FTIS…LIST), 103-123 (GMGL…GLFL), 129-149 (LVTV…LVGY), 164-184 (LLMG…LYGL), 206-226 (IAVW…LSAF), 240-260 (PTPV…ALAT), 274-294 (WHVL…LIAA), 311-331 (AGYL…GMIT), 332-352 (YMVT…LFGL), 373-393 (AFCL…AGFF), 406-426 (GLYL…YYYL), and 462-482 (VGIA…NPII).

The protein belongs to the complex I subunit 2 family. As to quaternary structure, NDH is composed of at least 16 different subunits, 5 of which are encoded in the nucleus.

The protein resides in the plastid. It is found in the chloroplast thylakoid membrane. The catalysed reaction is a plastoquinone + NADH + (n+1) H(+)(in) = a plastoquinol + NAD(+) + n H(+)(out). The enzyme catalyses a plastoquinone + NADPH + (n+1) H(+)(in) = a plastoquinol + NADP(+) + n H(+)(out). NDH shuttles electrons from NAD(P)H:plastoquinone, via FMN and iron-sulfur (Fe-S) centers, to quinones in the photosynthetic chain and possibly in a chloroplast respiratory chain. The immediate electron acceptor for the enzyme in this species is believed to be plastoquinone. Couples the redox reaction to proton translocation, and thus conserves the redox energy in a proton gradient. This is NAD(P)H-quinone oxidoreductase subunit 2, chloroplastic from Zygnema circumcarinatum (Green alga).